The following is a 396-amino-acid chain: Phosphoglycerate kinase (396 aa).

Substrate is bound by residues 21-23 (DFN), Arg36, 59-62 (HFDR), Arg118, and Arg151. Residues Lys201, Glu323, and 353–356 (GGDT) each bind ATP.

It belongs to the phosphoglycerate kinase family. As to quaternary structure, monomer.

Its subcellular location is the cytoplasm. The enzyme catalyses (2R)-3-phosphoglycerate + ATP = (2R)-3-phospho-glyceroyl phosphate + ADP. It functions in the pathway carbohydrate degradation; glycolysis; pyruvate from D-glyceraldehyde 3-phosphate: step 2/5. The chain is Phosphoglycerate kinase from Caulobacter sp. (strain K31).